The sequence spans 230 residues: A-type ATP synthase subunit D (230 aa).

The tract at residues 204-230 (AKKEEEEDALAAEEEAEEEPEAVTADD) is disordered. The segment covering 208-230 (EEEDALAAEEEAEEEPEAVTADD) has biased composition (acidic residues).

This sequence belongs to the V-ATPase D subunit family. In terms of assembly, has multiple subunits with at least A(3), B(3), C, D, E, F, H, I and proteolipid K(x).

Its subcellular location is the cell membrane. Component of the A-type ATP synthase that produces ATP from ADP in the presence of a proton gradient across the membrane. The protein is A-type ATP synthase subunit D of Haloarcula marismortui (strain ATCC 43049 / DSM 3752 / JCM 8966 / VKM B-1809) (Halobacterium marismortui).